The sequence spans 82 residues: MAFTLYSLMQAALLCVNAIAVLHEERFLKNIGWGTDQGIGGFGEEPGIKSQLLNLIRSVRTVMRVPLIIVNSITIVLLLLFG.

A run of 2 helical transmembrane segments spans residues 2–22 and 62–82; these read AFTL…IAVL and VMRV…LLFG.

This sequence belongs to the YOS1 family.

It is found in the endoplasmic reticulum membrane. Regulator of endoplasmic reticulum secretion that acts as a key determinant of brain size. Required for secretion of extracellular matrix proteins. Required for correct brain development by depositing sufficient extracellular matrix proteins for tissue integrity and the proliferation of neural progenitors. Acts as a regulator of the unfolded protein response (UPR). The chain is Immediate early response 3-interacting protein 1 from Rattus norvegicus (Rat).